Here is a 234-residue protein sequence, read N- to C-terminus: Ribonuclease Trv (234 aa).

Intrachain disulfides connect Cys-5-Cys-24, Cys-13-Cys-59, Cys-23-Cys-125, Cys-67-Cys-117, and Cys-189-Cys-224. The N-linked (GlcNAc...) asparagine glycan is linked to Asn-15. The active site involves His-52. A glycan (N-linked (GlcNAc...) asparagine) is linked at Asn-75. Residues Glu-110 and His-114 contribute to the active site.

It belongs to the RNase T2 family.

It catalyses the reaction a ribonucleotidyl-ribonucleotide-RNA + H2O = a 3'-end 3'-phospho-ribonucleotide-RNA + a 5'-end dephospho-ribonucleoside-RNA + H(+). This is a base non-specific and adenylic acid preferential ribonuclease. This is Ribonuclease Trv from Hypocrea rufa (Trichoderma viride).